A 20-amino-acid polypeptide reads, in one-letter code: Pregnancy-associated glycoprotein 71D (20 aa).

Asn4 carries an N-linked (GlcNAc...) asparagine glycan.

Belongs to the peptidase A1 family. As to expression, chorionic epithelium (trophectoderm) and placental cotyledons.

The protein resides in the secreted. It is found in the extracellular space. This is Pregnancy-associated glycoprotein 71D from Bison bonasus (European bison).